A 247-amino-acid polypeptide reads, in one-letter code: E3 ubiquitin-protein ligase RNF182 (247 aa).

An RING-type zinc finger spans residues 20–68 (CKICYNRYNLKQRKPKVLECCHRVCAKCLYKIIDFGDSPQGVIVCPFCR). 2 consecutive transmembrane segments (helical) span residues 184–204 (VLVW…IYLL) and 211–231 (LGVV…VYGF).

As to quaternary structure, interacts with ATP6V0C. Up-regulated in neuronal cells subjected to cell death-inducing injuries, such as oxygen and glucose deprivation (at protein level). Could be up-regulated in Alzheimer disease brains. Highly expressed in innate immune organs such as lymph nodes and spleen and in immune cells such as macrophages and dendritic cells.

Its subcellular location is the membrane. It localises to the cytoplasm. It carries out the reaction S-ubiquitinyl-[E2 ubiquitin-conjugating enzyme]-L-cysteine + [acceptor protein]-L-lysine = [E2 ubiquitin-conjugating enzyme]-L-cysteine + N(6)-ubiquitinyl-[acceptor protein]-L-lysine.. It functions in the pathway protein modification; protein ubiquitination. Its function is as follows. E3 ubiquitin-protein ligase that mediates the ubiquitination of ATP6V0C and targets it to degradation via the ubiquitin-proteasome pathway. Also plays a role in the inhibition of TLR-triggered innate immune response by mediating 'Lys'-48-linked ubiquitination and subsequent degradation of NF-kappa-B component RELA. The chain is E3 ubiquitin-protein ligase RNF182 (RNF182) from Homo sapiens (Human).